A 320-amino-acid polypeptide reads, in one-letter code: Cytochrome f (320 aa).

The N-terminal stretch at 1-35 (MQTRNTFSWIKEQITRSISASLMIYIITRTSISNA) is a signal peptide. Heme contacts are provided by Y36, C56, C59, and H60. A helical membrane pass occupies residues 286-306 (VQGLLFFFAAVILAQIFLVLK).

This sequence belongs to the cytochrome f family. As to quaternary structure, the 4 large subunits of the cytochrome b6-f complex are cytochrome b6, subunit IV (17 kDa polypeptide, petD), cytochrome f and the Rieske protein, while the 4 small subunits are PetG, PetL, PetM and PetN. The complex functions as a dimer. Heme is required as a cofactor.

Its subcellular location is the plastid. The protein localises to the chloroplast thylakoid membrane. Component of the cytochrome b6-f complex, which mediates electron transfer between photosystem II (PSII) and photosystem I (PSI), cyclic electron flow around PSI, and state transitions. This is Cytochrome f from Helianthus annuus (Common sunflower).